Consider the following 608-residue polypeptide: UvrABC system protein C (608 aa).

Positions 16–94 constitute a GIY-YIG domain; sequence NRPGVYRMFD…IKEWRPPYNI (79 aa). The region spanning 204-239 is the UVR domain; that stretch reads NALADELNVGMEQAAMRLDFEKAAELRDQVAILRRV.

Belongs to the UvrC family. Interacts with UvrB in an incision complex.

The protein localises to the cytoplasm. The UvrABC repair system catalyzes the recognition and processing of DNA lesions. UvrC both incises the 5' and 3' sides of the lesion. The N-terminal half is responsible for the 3' incision and the C-terminal half is responsible for the 5' incision. This Pseudomonas aeruginosa (strain LESB58) protein is UvrABC system protein C.